The chain runs to 554 residues: Phospholipase B-like protein E (554 aa).

Positions 1-19 are cleaved as a signal peptide; it reads MKLFILLIVIVFLISNSYS. Residues Asn-113, Asn-140, Asn-231, Asn-302, Asn-340, and Asn-546 are each glycosylated (N-linked (GlcNAc...) asparagine).

This sequence belongs to the phospholipase B-like family.

Its subcellular location is the secreted. Its function is as follows. Probable phospholipase. This Dictyostelium discoideum (Social amoeba) protein is Phospholipase B-like protein E (plbE).